We begin with the raw amino-acid sequence, 1188 residues long: MAGHEVRYGKHRTRRSFSRIKEVLDLPNLIEIQTDSFQDFLDSGLKEVFEDVLPISNFTDTMELEFVGYEFKEPKYTLEEARIHDASYSAPIFVTFRLVNKETGEIKTQEVFFGDFPIMTEMGTFIINGGERIIVSQLVRSPGVYFNDKVDKNGKVGYGSTVIPNRGAWLELETDSKDIAYTRIDRTRKIPFTTLVRALGFSGDDEIVDIFGESDLVRNTIEKDIHKNPSDSRTDEALKEIYERLRPGEPKTADSSRSLLIARFFDARRYDLAAVGRYKVNKKLNIKTRLLNQIIAENLVDAETGEILVEAGTEMTRSVIESIEEHLDGDLNKFVYTPNDYAVVTEPVVLQKFKVVSPIDPDRVVTIVGNANPDDKVRALTPADILAEMSYFLNLAEGLGKVDDIDHLGNRRIRAVGELLANQFRIGLARMERNVRERMSVQDNDVLTPQQIINIRPVTAAVKEFFGSSQLSQFMDQHNPLSELSHKRRLSALGPGGLTRDRAGYEVRDVHYTHYGRMCPIETPEGPNIGLINNLSSFGHLNKYGFIQTPYRKVDRATGRVTNEIVWLTADEEDEYTVAQANSKLNEDGTFAEEIVMGRHQGNNQEFSASVVDFVDVSPKQVVAVATACIPFLENDDSNRALMGANMQRQAVPLIDPKAPYVGTGMEYQAAHDSGAAVIAQHNGKVVFSDAEKVEIRRQDGSLDVYHITKFRRSNSGTAYNQRTLVKVGDIVEKGDFIADGPSMENGEMALGQNPVVAYMTWEGYNFEDAVIMSERLVKEDVYTSVHLEEFESETRDTKLGPEEITREIPNVGEEALKDLDEMGIIRIGAEVKEGDILVGKVTPKGEKDLSAEERLLHAIFGDKSREVRDTSLRVPHGGDGIVRDVKIFTRANGDELQSGVNMLVRVYIAQKRKIKVGDKMAGRHGNKGVVSRIVPVEDMPYLPDGTPVDIMLNPLGVPSRMNIGQVMELHLGMAARNLGIHIATPVFDGASSEDLWDTVREAGMDSDAKTVLYDGRTGEPFDNRVSVGVMYMIKLHHMVDDKLHARSVGPYSLVTQQPLGGKAQFGGQRFGEMEVWALEAYGASNVLQEILTYKSDDVTGRLKAYEAITKGKPIPKPGVPESFRVLVKELQSLGLDMRVLDEDDNEVELRDLDEGEDDDIMHVDDLEKAREKQAQETQEVSETTDEK.

This sequence belongs to the RNA polymerase beta chain family. In terms of assembly, the RNAP catalytic core consists of 2 alpha, 1 beta, 1 beta' and 1 omega subunit. When a sigma factor is associated with the core the holoenzyme is formed, which can initiate transcription.

The enzyme catalyses RNA(n) + a ribonucleoside 5'-triphosphate = RNA(n+1) + diphosphate. Its function is as follows. DNA-dependent RNA polymerase catalyzes the transcription of DNA into RNA using the four ribonucleoside triphosphates as substrates. This Streptococcus pyogenes serotype M3 (strain ATCC BAA-595 / MGAS315) protein is DNA-directed RNA polymerase subunit beta.